The sequence spans 679 residues: Protein polyglycylase TTLL10 (679 aa).

The segment covering 1-15 has biased composition (basic residues); sequence MPLHPPARRPHGHRR. Disordered stretches follow at residues 1-33, 49-77, and 96-124; these read MPLHPPARRPHGHRRNGSEAQTEATTQDTGRLS, GHRAARRPRRGVGTTSASRAPRPGALMPA, and VSFKRPKRSRTHQSHTKVPGWTHEKRMGS. Polar residues predominate over residues 18-30; sequence SEAQTEATTQDTG. Residues 96–110 show a composition bias toward basic residues; it reads VSFKRPKRSRTHQSH. The TTL domain maps to 172-543; it reads QGPFFYIGGT…TCQKSLHSQK (372 aa). ATP-binding positions include Lys-304, 310-311, 353-356, 366-368, and 409-410; these read QG, QRYV, KFD, and TN. Residue Gln-310 participates in a protein binding. Residues Asp-489, Glu-502, and Asn-504 each coordinate Mg(2+). The tract at residues 605–679 is disordered; it reads DRPAARKSMS…EQRSTSHRGS (75 aa).

It depends on Mg(2+) as a cofactor.

Its subcellular location is the cytoplasm. The protein localises to the cytoskeleton. The protein resides in the cell projection. It localises to the cilium. It is found in the cilium axoneme. It catalyses the reaction (glycyl)(n)-glycyl-L-glutamyl-[protein] + glycine + ATP = (glycyl)(n+1)-glycyl-L-glutamyl-[protein] + ADP + phosphate + H(+). Functionally, polyglycylase which modifies both tubulin and non-tubulin proteins, generating polyglycine side chains of variable lengths on the gamma-carboxyl groups of specific glutamate residues of target proteins. Involved in the elongation step rather than the initiation step of the polyglycylation reaction. Polyglycylates alpha-tubulin and beta-tubulin. Polyglycylates non-tubulin proteins such as nucleosome assembly protein NAP1. The sequence is that of Protein polyglycylase TTLL10 from Rattus norvegicus (Rat).